Consider the following 165-residue polypeptide: C-phycoerythrin class 2 subunit alpha (165 aa).

Cys75 is a phycourobilin binding site. Positions 83 and 140 each coordinate (2R,3E)-phycoerythrobilin.

It belongs to the phycobiliprotein family. Heterodimer of an alpha and a beta chain. In terms of processing, contains two covalently linked phycoerythrobilin chromophores and one covalently linked phycourobilin chromophore.

It localises to the cellular thylakoid membrane. In terms of biological role, light-harvesting photosynthetic bile pigment-protein from the phycobiliprotein complex. This is C-phycoerythrin class 2 subunit alpha (mpeA) from Synechococcus sp. (strain WH8020).